Here is a 102-residue protein sequence, read N- to C-terminus: NADH-quinone oxidoreductase subunit K (102 aa).

Helical transmembrane passes span 6–26, 30–50, and 63–83; these read LTGFMILAAGLFAAGVFGVLA, ILFQLIALEVALSGPALAFIA, and MFVLTLTLAAAEVAVGLALFL.

It belongs to the complex I subunit 4L family. As to quaternary structure, NDH-1 is composed of 14 different subunits. Subunits NuoA, H, J, K, L, M, N constitute the membrane sector of the complex.

It is found in the cell inner membrane. It carries out the reaction a quinone + NADH + 5 H(+)(in) = a quinol + NAD(+) + 4 H(+)(out). NDH-1 shuttles electrons from NADH, via FMN and iron-sulfur (Fe-S) centers, to quinones in the respiratory chain. The immediate electron acceptor for the enzyme in this species is believed to be ubiquinone. Couples the redox reaction to proton translocation (for every two electrons transferred, four hydrogen ions are translocated across the cytoplasmic membrane), and thus conserves the redox energy in a proton gradient. The protein is NADH-quinone oxidoreductase subunit K of Rhodopseudomonas palustris (strain BisA53).